Here is a 31-residue protein sequence, read N- to C-terminus: Cytochrome b6-f complex subunit 6 (31 aa).

Residues 4–26 (ITSYFGFLLAALTITSALLIGLN) traverse the membrane as a helical segment.

Belongs to the PetL family. In terms of assembly, the 4 large subunits of the cytochrome b6-f complex are cytochrome b6, subunit IV (17 kDa polypeptide, PetD), cytochrome f and the Rieske protein, while the 4 small subunits are PetG, PetL, PetM and PetN. The complex functions as a dimer.

The protein resides in the plastid. The protein localises to the chloroplast thylakoid membrane. In terms of biological role, component of the cytochrome b6-f complex, which mediates electron transfer between photosystem II (PSII) and photosystem I (PSI), cyclic electron flow around PSI, and state transitions. PetL is important for photoautotrophic growth as well as for electron transfer efficiency and stability of the cytochrome b6-f complex. The protein is Cytochrome b6-f complex subunit 6 of Amborella trichopoda.